We begin with the raw amino-acid sequence, 314 residues long: Protein nutcracker (314 aa).

The interval 1 to 62 is disordered; the sequence is MSDTKSEIEG…PRLIQEKSTQ (62 aa). Positions 21–34 are enriched in low complexity; that stretch reads QQQQQPQQQQNEQQ. A required for interaction with skpA and Cul1, but not with PI31 region spans residues 257-314; it reads MQMEMKLQPSLLGLPDELYFEIFRYLDKSQLNVVARVNRHLHFYSKEVERKRLKGGRS. In terms of domain architecture, F-box spans 264 to 309; that stretch reads QPSLLGLPDELYFEIFRYLDKSQLNVVARVNRHLHFYSKEVERKRL.

In terms of assembly, component of an SCF (SKP1-CUL1-F-box protein) E3 ubiquitin-protein ligase complex, at least composed of ntc, skpA and Cul1. Interacts (via F-box domain) with skpA and Cul1. Interacts with Prosalpha7 and PI31. Interacts with Bruce. As to expression, expressed in testis (at protein level).

The protein localises to the cytoplasm. In terms of biological role, functions together with PI31 to control non-apoptotic caspase activation during sperm individualization. Positively regulates PI31 stability. The sequence is that of Protein nutcracker from Drosophila melanogaster (Fruit fly).